A 96-amino-acid polypeptide reads, in one-letter code: MQVDDVLLSRLEKLSFLKISEDKREEIVSQLSEIVNFVENLSLLDTQNVDEKFAMSNDSTFLREDTAFCDTSINESILKNAPLSSDNFFVVPKIIE.

Belongs to the GatC family. Heterotrimer of A, B and C subunits.

The catalysed reaction is L-glutamyl-tRNA(Gln) + L-glutamine + ATP + H2O = L-glutaminyl-tRNA(Gln) + L-glutamate + ADP + phosphate + H(+). The enzyme catalyses L-aspartyl-tRNA(Asn) + L-glutamine + ATP + H2O = L-asparaginyl-tRNA(Asn) + L-glutamate + ADP + phosphate + 2 H(+). Its function is as follows. Allows the formation of correctly charged Asn-tRNA(Asn) or Gln-tRNA(Gln) through the transamidation of misacylated Asp-tRNA(Asn) or Glu-tRNA(Gln) in organisms which lack either or both of asparaginyl-tRNA or glutaminyl-tRNA synthetases. The reaction takes place in the presence of glutamine and ATP through an activated phospho-Asp-tRNA(Asn) or phospho-Glu-tRNA(Gln). This chain is Aspartyl/glutamyl-tRNA(Asn/Gln) amidotransferase subunit C, found in Sulfurimonas denitrificans (strain ATCC 33889 / DSM 1251) (Thiomicrospira denitrificans (strain ATCC 33889 / DSM 1251)).